The chain runs to 365 residues: Cytochrome P450 71A3 (365 aa).

Belongs to the cytochrome P450 family. Heme serves as cofactor.

In terms of biological role, may have a role in maturation, such as during flavor formation or other metabolite production specific to aging tissues. The chain is Cytochrome P450 71A3 (CYP71A3) from Solanum melongena (Eggplant).